A 247-amino-acid chain; its full sequence is MEGVEEKKKVPAVPETLKKKRRNFAELKIKRLRKKFAQKMLRKARRKLIYEKAKHYHKEYRQMYRTEIRMARMARKAGNFYVPAEPKLAFVIRIRGINGVSPKVRKVLQLLRLRQIFNGTFVKLNKASINMLRIVEPYIAWGYPNLKSVNELIYKRGYGKINKKRIALTDNALIARSLGKYGIICMEDLIHEIYTVGKRFKEANNFLWPFKLSSPRGGMKKKTTHFVEGGDAGNREDQINRLIRRMN.

The residue at position 1 (Met-1) is an N-acetylmethionine. 4 tandem repeats follow at residues 7-17 (KKKVPAVPETL), 18-29 (KKKRRNFAELKI), 30-41 (KRLRKKFAQKML), and 42-53 (RKARRKLIYEKA). Residues 7–53 (KKKVPAVPETLKKKRRNFAELKIKRLRKKFAQKMLRKARRKLIYEKA) form a 4 X 12 AA tandem repeats region. Thr-16 is subject to Phosphothreonine. Lys-123 bears the N6-acetyllysine mark. Lys-126 is subject to N6-succinyllysine. Residue Tyr-138 is modified to Phosphotyrosine.

It belongs to the universal ribosomal protein uL30 family. As to quaternary structure, component of the large ribosomal subunit. Homodimer. Interacts with DHX33.

It localises to the cytoplasm. Its function is as follows. Component of the large ribosomal subunit. The ribosome is a large ribonucleoprotein complex responsible for the synthesis of proteins in the cell. Binds to G-rich structures in 28S rRNA and in mRNAs. Plays a regulatory role in the translation apparatus; inhibits cell-free translation of mRNAs. This is Large ribosomal subunit protein uL30 (RPL7) from Pongo abelii (Sumatran orangutan).